Reading from the N-terminus, the 224-residue chain is 7-cyano-7-deazaguanine synthase (224 aa).

ATP is bound at residue 10–20 (LSGGLDSATVV). Zn(2+) contacts are provided by C189, C199, C202, and C205.

It belongs to the QueC family. It depends on Zn(2+) as a cofactor.

The catalysed reaction is 7-carboxy-7-deazaguanine + NH4(+) + ATP = 7-cyano-7-deazaguanine + ADP + phosphate + H2O + H(+). The protein operates within purine metabolism; 7-cyano-7-deazaguanine biosynthesis. In terms of biological role, catalyzes the ATP-dependent conversion of 7-carboxy-7-deazaguanine (CDG) to 7-cyano-7-deazaguanine (preQ(0)). The polypeptide is 7-cyano-7-deazaguanine synthase (Pseudomonas fluorescens (strain SBW25)).